A 714-amino-acid polypeptide reads, in one-letter code: Nuclear protein MDM1 (714 aa).

Positions 9–15 match the ST]-E-Y-X(3)-F motif 1; required for efficient microtubule binding and stabilization motif; that stretch reads SEYQRNF. The tract at residues 79 to 152 is disordered; sequence NVVASPEPEA…HTPVNENVEL (74 aa). Serine 83 carries the phosphoserine modification. Positions 93 to 111 are enriched in basic and acidic residues; sequence KSQEAEQKDVTQERVHSLE. Residues serine 123 and serine 126 each carry the phosphoserine modification. The span at 138 to 147 shows a compositional bias: polar residues; that stretch reads EGVTNHTPVN. The ST]-E-Y-X(3)-F motif 2; required for efficient microtubule binding and stabilization motif lies at 189-195; the sequence is SEYQRQF. Residues 232–238 carry the ST]-E-Y-X(3)-F motif 3; required for efficient microtubule binding and stabilization motif; that stretch reads TEYKRNF. Phosphoserine occurs at positions 242 and 263. The short motif at 306 to 312 is the ST]-E-Y-X(3)-F motif 4; required for efficient microtubule binding and stabilization element; it reads SEYRAKF. Residue serine 314 is modified to Phosphoserine. A disordered region spans residues 391–571; it reads DLAGDPTSHK…DCLETSKNDF (181 aa). Over residues 460 to 469 the composition is skewed to acidic residues; sequence KEEEDDNEEE. Basic and acidic residues predominate over residues 482-501; it reads EQEKLDVREKSKADKMKEGS. Phosphoserine occurs at positions 560 and 584. The segment at 616 to 637 is disordered; that stretch reads SKIPKYPTNPPGQLPSPPHVPS. Pro residues predominate over residues 622 to 635; it reads PTNPPGQLPSPPHV. Serine 648 is subject to Phosphoserine.

This sequence belongs to the MDM1 family.

Its subcellular location is the nucleus. It is found in the cytoplasm. The protein localises to the cytoskeleton. The protein resides in the microtubule organizing center. It localises to the centrosome. Its subcellular location is the centriole. In terms of biological role, microtubule-binding protein that negatively regulates centriole duplication. Binds to and stabilizes microtubules. This Homo sapiens (Human) protein is Nuclear protein MDM1 (MDM1).